Here is a 148-residue protein sequence, read N- to C-terminus: Ubiquitin-conjugating enzyme E2 28 (148 aa).

A UBC core domain is found at M1 to M147. Catalysis depends on C85, which acts as the Glycyl thioester intermediate.

It belongs to the ubiquitin-conjugating enzyme family. In terms of assembly, interacts with SINAT5. Expressed in seeds, pistils, siliques, hypocotyls and leaves.

The catalysed reaction is S-ubiquitinyl-[E1 ubiquitin-activating enzyme]-L-cysteine + [E2 ubiquitin-conjugating enzyme]-L-cysteine = [E1 ubiquitin-activating enzyme]-L-cysteine + S-ubiquitinyl-[E2 ubiquitin-conjugating enzyme]-L-cysteine.. Its pathway is protein modification; protein ubiquitination. In terms of biological role, accepts the ubiquitin from the E1 complex and catalyzes its covalent attachment to other proteins. The chain is Ubiquitin-conjugating enzyme E2 28 from Arabidopsis thaliana (Mouse-ear cress).